The primary structure comprises 229 residues: Cytochrome c oxidase subunit 2 (229 aa).

Residues 1–14 (MPTPNQTNFQDAAS) lie on the Mitochondrial intermembrane side of the membrane. A helical transmembrane segment spans residues 15–45 (PLMEELTHFHDHTLMIVFMISLLVLYILLSM). The Mitochondrial matrix portion of the chain corresponds to 46–59 (LSTKLTHTNTANAQ). Residues 60–87 (QAEMVWTILPAIILITIALPSLQILYMM) form a helical membrane-spanning segment. The Mitochondrial intermembrane segment spans residues 88–229 (DEINKPHMTI…DLWLAMIDTL (142 aa)). Cu cation-binding residues include H161, C196, E198, C200, H204, and M207. Position 198 (E198) interacts with Mg(2+).

Belongs to the cytochrome c oxidase subunit 2 family. In terms of assembly, component of the cytochrome c oxidase (complex IV, CIV), a multisubunit enzyme composed of 14 subunits. The complex is composed of a catalytic core of 3 subunits MT-CO1, MT-CO2 and MT-CO3, encoded in the mitochondrial DNA, and 11 supernumerary subunits COX4I, COX5A, COX5B, COX6A, COX6B, COX6C, COX7A, COX7B, COX7C, COX8 and NDUFA4, which are encoded in the nuclear genome. The complex exists as a monomer or a dimer and forms supercomplexes (SCs) in the inner mitochondrial membrane with NADH-ubiquinone oxidoreductase (complex I, CI) and ubiquinol-cytochrome c oxidoreductase (cytochrome b-c1 complex, complex III, CIII), resulting in different assemblies (supercomplex SCI(1)III(2)IV(1) and megacomplex MCI(2)III(2)IV(2)). Found in a complex with TMEM177, COA6, COX18, COX20, SCO1 and SCO2. Interacts with TMEM177 in a COX20-dependent manner. Interacts with COX20. Interacts with COX16. Requires Cu cation as cofactor.

Its subcellular location is the mitochondrion inner membrane. It catalyses the reaction 4 Fe(II)-[cytochrome c] + O2 + 8 H(+)(in) = 4 Fe(III)-[cytochrome c] + 2 H2O + 4 H(+)(out). Component of the cytochrome c oxidase, the last enzyme in the mitochondrial electron transport chain which drives oxidative phosphorylation. The respiratory chain contains 3 multisubunit complexes succinate dehydrogenase (complex II, CII), ubiquinol-cytochrome c oxidoreductase (cytochrome b-c1 complex, complex III, CIII) and cytochrome c oxidase (complex IV, CIV), that cooperate to transfer electrons derived from NADH and succinate to molecular oxygen, creating an electrochemical gradient over the inner membrane that drives transmembrane transport and the ATP synthase. Cytochrome c oxidase is the component of the respiratory chain that catalyzes the reduction of oxygen to water. Electrons originating from reduced cytochrome c in the intermembrane space (IMS) are transferred via the dinuclear copper A center (CU(A)) of subunit 2 and heme A of subunit 1 to the active site in subunit 1, a binuclear center (BNC) formed by heme A3 and copper B (CU(B)). The BNC reduces molecular oxygen to 2 water molecules using 4 electrons from cytochrome c in the IMS and 4 protons from the mitochondrial matrix. This is Cytochrome c oxidase subunit 2 (MT-CO2) from Pelomedusa subrufa (African side-necked turtle).